The sequence spans 266 residues: Heat-inducible transcription repressor HrcA (266 aa).

This sequence belongs to the HrcA family.

Functionally, negative regulator of class I heat shock genes (grpE-dnaK-dnaJ and groELS operons). Prevents heat-shock induction of these operons. The protein is Heat-inducible transcription repressor HrcA of Helicobacter pylori (strain J99 / ATCC 700824) (Campylobacter pylori J99).